We begin with the raw amino-acid sequence, 296 residues long: Light-independent protochlorophyllide reductase iron-sulfur ATP-binding protein (296 aa).

ATP is bound by residues 10–15 (GIGKST) and K39. S14 contributes to the Mg(2+) binding site. [4Fe-4S] cluster-binding residues include C95 and C129. 180-181 (NR) provides a ligand contact to ATP.

Belongs to the NifH/BchL/ChlL family. As to quaternary structure, homodimer. Protochlorophyllide reductase is composed of three subunits; ChlL, ChlN and ChlB. [4Fe-4S] cluster serves as cofactor.

Its subcellular location is the plastid. The protein resides in the chloroplast. The catalysed reaction is chlorophyllide a + oxidized 2[4Fe-4S]-[ferredoxin] + 2 ADP + 2 phosphate = protochlorophyllide a + reduced 2[4Fe-4S]-[ferredoxin] + 2 ATP + 2 H2O. The protein operates within porphyrin-containing compound metabolism; chlorophyll biosynthesis (light-independent). Its function is as follows. Component of the dark-operative protochlorophyllide reductase (DPOR) that uses Mg-ATP and reduced ferredoxin to reduce ring D of protochlorophyllide (Pchlide) to form chlorophyllide a (Chlide). This reaction is light-independent. The L component serves as a unique electron donor to the NB-component of the complex, and binds Mg-ATP. The chain is Light-independent protochlorophyllide reductase iron-sulfur ATP-binding protein from Chlorokybus atmophyticus (Soil alga).